The chain runs to 491 residues: Probable cytosol aminopeptidase (491 aa).

Mn(2+) contacts are provided by lysine 260 and aspartate 265. Lysine 272 is an active-site residue. Aspartate 284, aspartate 343, and glutamate 345 together coordinate Mn(2+). Arginine 347 is a catalytic residue.

This sequence belongs to the peptidase M17 family. It depends on Mn(2+) as a cofactor.

It is found in the cytoplasm. The enzyme catalyses Release of an N-terminal amino acid, Xaa-|-Yaa-, in which Xaa is preferably Leu, but may be other amino acids including Pro although not Arg or Lys, and Yaa may be Pro. Amino acid amides and methyl esters are also readily hydrolyzed, but rates on arylamides are exceedingly low.. It catalyses the reaction Release of an N-terminal amino acid, preferentially leucine, but not glutamic or aspartic acids.. In terms of biological role, presumably involved in the processing and regular turnover of intracellular proteins. Catalyzes the removal of unsubstituted N-terminal amino acids from various peptides. This chain is Probable cytosol aminopeptidase, found in Rippkaea orientalis (strain PCC 8801 / RF-1) (Cyanothece sp. (strain PCC 8801)).